The chain runs to 638 residues: Neuroendocrine convertase 2 (638 aa).

The N-terminal stretch at 1-25 (MRGGCISQGKAAAGLLFCVMVFASA) is a signal peptide. Residues 26 to 109 (ERPVFTNHFL…QQEGFNRKKR (84 aa)) constitute a propeptide that is removed on maturation. The Peptidase S8 domain maps to 129 to 453 (QWYLINTGQA…YGVLDAGAMV (325 aa)). Catalysis depends on charge relay system residues aspartate 167 and histidine 208. 2 cysteine pairs are disulfide-bonded: cysteine 225/cysteine 376 and cysteine 317/cysteine 347. N-linked (GlcNAc...) asparagine glycosylation occurs at asparagine 375. Serine 384 (charge relay system) is an active-site residue. The region spanning 461–597 (TVPERFHCVG…TLMLHGTQSA (137 aa)) is the P/Homo B domain. Cysteine 468 and cysteine 494 are joined by a disulfide. Asparagine 514 and asparagine 524 each carry an N-linked (GlcNAc...) asparagine glycan.

The protein belongs to the peptidase S8 family. Furin subfamily.

The protein resides in the cytoplasmic vesicle. Its subcellular location is the secretory vesicle. The protein localises to the secreted. It catalyses the reaction Release of protein hormones and neuropeptides from their precursors, generally by hydrolysis of -Lys-Arg-|- bonds.. Functionally, serine endopeptidase which is involved in the processing of hormone and other protein precursors at sites comprised of pairs of basic amino acid residues. Responsible for the release of glucagon from proglucagon in pancreatic A cells. This chain is Neuroendocrine convertase 2 (PCSK2), found in Bos taurus (Bovine).